Consider the following 240-residue polypeptide: Phosducin-like protein 2 (240 aa).

The Phosducin domain maps to Gln54 to Thr214. Phosphoserine is present on residues Ser63 and Ser73. The tract at residues Phe99–Tyr240 is thioredoxin fold.

This sequence belongs to the phosducin family.

It localises to the cytoplasm. Modulates the activation of caspases during apoptosis. The sequence is that of Phosducin-like protein 2 from Drosophila melanogaster (Fruit fly).